Here is a 217-residue protein sequence, read N- to C-terminus: 3-oxo-tetronate 4-phosphate decarboxylase (217 aa).

Zn(2+) contacts are provided by histidine 93 and histidine 95. Tyrosine 120 functions as the Proton donor in the catalytic mechanism.

This sequence belongs to the aldolase class II family. AraD/FucA subfamily. Zn(2+) serves as cofactor.

It carries out the reaction 3-dehydro-4-O-phospho-D-erythronate + H(+) = dihydroxyacetone phosphate + CO2. The enzyme catalyses 3-dehydro-4-O-phospho-L-erythronate + H(+) = dihydroxyacetone phosphate + CO2. In terms of biological role, catalyzes the decarboxylation of 3-oxo-tetronate 4-phosphate to dihydroxyacetone phosphate (DHAP) and CO(2). The chain is 3-oxo-tetronate 4-phosphate decarboxylase from Cupriavidus necator (strain ATCC 17699 / DSM 428 / KCTC 22496 / NCIMB 10442 / H16 / Stanier 337) (Ralstonia eutropha).